A 73-amino-acid polypeptide reads, in one-letter code: DNA-directed RNA polymerase subunit omega (73 aa).

It belongs to the RNA polymerase subunit omega family. As to quaternary structure, the RNAP catalytic core consists of 2 alpha, 1 beta, 1 beta' and 1 omega subunit. When a sigma factor is associated with the core the holoenzyme is formed, which can initiate transcription.

The catalysed reaction is RNA(n) + a ribonucleoside 5'-triphosphate = RNA(n+1) + diphosphate. Functionally, promotes RNA polymerase assembly. Latches the N- and C-terminal regions of the beta' subunit thereby facilitating its interaction with the beta and alpha subunits. The polypeptide is DNA-directed RNA polymerase subunit omega (Oleidesulfovibrio alaskensis (strain ATCC BAA-1058 / DSM 17464 / G20) (Desulfovibrio alaskensis)).